We begin with the raw amino-acid sequence, 290 residues long: UPF0761 membrane protein ASA_4118 (290 aa).

The next 6 helical transmembrane spans lie at 48-68 (LLSL…FPVF), 104-124 (NTTA…ISAI), 144-164 (FAMY…SIAI), 182-202 (IGYL…FLLV), 216-236 (AFIG…GFAI), and 250-270 (ALAT…VVLL).

It belongs to the UPF0761 family.

The protein localises to the cell inner membrane. This Aeromonas salmonicida (strain A449) protein is UPF0761 membrane protein ASA_4118.